The sequence spans 81 residues: ATP synthase subunit c, chloroplastic (81 aa).

2 helical membrane-spanning segments follow: residues Pro-3–Gly-23 and Leu-53–Ala-73.

Belongs to the ATPase C chain family. As to quaternary structure, F-type ATPases have 2 components, F(1) - the catalytic core - and F(0) - the membrane proton channel. F(1) has five subunits: alpha(3), beta(3), gamma(1), delta(1), epsilon(1). F(0) has four main subunits: a(1), b(1), b'(1) and c(10-14). The alpha and beta chains form an alternating ring which encloses part of the gamma chain. F(1) is attached to F(0) by a central stalk formed by the gamma and epsilon chains, while a peripheral stalk is formed by the delta, b and b' chains.

The protein localises to the plastid. It localises to the chloroplast thylakoid membrane. F(1)F(0) ATP synthase produces ATP from ADP in the presence of a proton or sodium gradient. F-type ATPases consist of two structural domains, F(1) containing the extramembraneous catalytic core and F(0) containing the membrane proton channel, linked together by a central stalk and a peripheral stalk. During catalysis, ATP synthesis in the catalytic domain of F(1) is coupled via a rotary mechanism of the central stalk subunits to proton translocation. Functionally, key component of the F(0) channel; it plays a direct role in translocation across the membrane. A homomeric c-ring of between 10-14 subunits forms the central stalk rotor element with the F(1) delta and epsilon subunits. This Angiopteris evecta (Mule's foot fern) protein is ATP synthase subunit c, chloroplastic.